We begin with the raw amino-acid sequence, 293 residues long: 4-diphosphocytidyl-2-C-methyl-D-erythritol kinase (293 aa).

Residue K16 is part of the active site. 99–109 (PMGAGLGGGSS) contacts ATP. Residue D141 is part of the active site.

This sequence belongs to the GHMP kinase family. IspE subfamily.

The catalysed reaction is 4-CDP-2-C-methyl-D-erythritol + ATP = 4-CDP-2-C-methyl-D-erythritol 2-phosphate + ADP + H(+). It functions in the pathway isoprenoid biosynthesis; isopentenyl diphosphate biosynthesis via DXP pathway; isopentenyl diphosphate from 1-deoxy-D-xylulose 5-phosphate: step 3/6. Catalyzes the phosphorylation of the position 2 hydroxy group of 4-diphosphocytidyl-2C-methyl-D-erythritol. This Burkholderia thailandensis (strain ATCC 700388 / DSM 13276 / CCUG 48851 / CIP 106301 / E264) protein is 4-diphosphocytidyl-2-C-methyl-D-erythritol kinase.